Reading from the N-terminus, the 121-residue chain is Large ribosomal subunit protein bL12 (121 aa).

It belongs to the bacterial ribosomal protein bL12 family. As to quaternary structure, homodimer. Part of the ribosomal stalk of the 50S ribosomal subunit. Forms a multimeric L10(L12)X complex, where L10 forms an elongated spine to which 2 to 4 L12 dimers bind in a sequential fashion. Binds GTP-bound translation factors.

In terms of biological role, forms part of the ribosomal stalk which helps the ribosome interact with GTP-bound translation factors. Is thus essential for accurate translation. This chain is Large ribosomal subunit protein bL12, found in Limosilactobacillus reuteri (strain DSM 20016) (Lactobacillus reuteri).